A 580-amino-acid chain; its full sequence is Transcription factor coe2-B (580 aa).

Residues 60–63 (RKSN) form an interaction with DNA region. A C5-type zinc finger spans residues 148 to 167 (CRVLLTHEVMCSRCCEKKSC). 2 interaction with DNA regions span residues 194–201 (NCLKTAGN) and 233–236 (NNSK). Residues 259–341 (PCIKAISPSE…CKGAPGRFIY (83 aa)) enclose the IPT/TIG domain. Residues 455-492 (IRNTSSISPRGYSSSSTPQQSNYSTPSNSMNGYSNVPM) form a disordered region. The span at 459–481 (SSISPRGYSSSSTPQQSNYSTPS) shows a compositional bias: low complexity. Polar residues predominate over residues 482-492 (NSMNGYSNVPM).

It belongs to the COE family. In terms of tissue distribution, in embryos, expressed in precursors of primary neurons. In adults, expressed at high levels in the brain, and at low levels in the somatic muscles, testis, and possibly the spleen.

The protein resides in the nucleus. Its function is as follows. May play a pivotal role in the transcriptional cascade that specifies primary neurons in embryos. Stabilizes the higher neural potential of selected progenitor cells that express neurog2/X-ngnr-1 by maintaining Delta-Notch signaling. Thus ensures the transition between neural competence and irreversible commitment to a neural fate. Also promotes neuronal differentiation by activating neurod1 expression, directly or indirectly. In Xenopus laevis (African clawed frog), this protein is Transcription factor coe2-B.